The primary structure comprises 262 residues: Purine nucleoside phosphorylase SSP1584 (262 aa).

Residues histidine 79, cysteine 124, and histidine 141 each contribute to the Zn(2+) site.

The protein belongs to the purine nucleoside phosphorylase YfiH/LACC1 family. As to quaternary structure, homodimer. The cofactor is Cu(2+). It depends on Zn(2+) as a cofactor.

It carries out the reaction adenosine + phosphate = alpha-D-ribose 1-phosphate + adenine. It catalyses the reaction S-methyl-5'-thioadenosine + phosphate = 5-(methylsulfanyl)-alpha-D-ribose 1-phosphate + adenine. The catalysed reaction is inosine + phosphate = alpha-D-ribose 1-phosphate + hypoxanthine. The enzyme catalyses adenosine + H2O + H(+) = inosine + NH4(+). Purine nucleoside enzyme that catalyzes the phosphorolysis of adenosine and inosine nucleosides, yielding D-ribose 1-phosphate and the respective free bases, adenine and hypoxanthine. Also catalyzes the phosphorolysis of S-methyl-5'-thioadenosine into adenine and S-methyl-5-thio-alpha-D-ribose 1-phosphate. Also has adenosine deaminase activity. This chain is Purine nucleoside phosphorylase SSP1584, found in Staphylococcus saprophyticus subsp. saprophyticus (strain ATCC 15305 / DSM 20229 / NCIMB 8711 / NCTC 7292 / S-41).